We begin with the raw amino-acid sequence, 222 residues long: Cytidylate kinase (222 aa).

Gly7 to Ser15 provides a ligand contact to ATP.

This sequence belongs to the cytidylate kinase family. Type 1 subfamily.

The protein localises to the cytoplasm. It carries out the reaction CMP + ATP = CDP + ADP. It catalyses the reaction dCMP + ATP = dCDP + ADP. The protein is Cytidylate kinase of Borrelia turicatae (strain 91E135).